A 247-amino-acid polypeptide reads, in one-letter code: Granzyme B(G,H) (247 aa).

The N-terminal stretch at 1 to 18 (MKILLLLLTLSLASRTKA) is a signal peptide. The propeptide at 19–20 (GE) is activation peptide. The Peptidase S1 domain maps to 21 to 245 (IIGGHEVKPH…FLSWIKKTMK (225 aa)). A disulfide bridge connects residues C49 and C65. The Charge relay system role is filled by H64. The N-linked (GlcNAc...) asparagine glycan is linked to N71. D108 (charge relay system) is an active-site residue. Disulfide bonds link C142/C209 and C173/C188. N-linked (GlcNAc...) asparagine glycosylation is present at N182. S203 (charge relay system) is an active-site residue.

It belongs to the peptidase S1 family. Granzyme subfamily.

Its subcellular location is the secreted. It localises to the cytolytic granule. The enzyme catalyses Preferential cleavage: -Asp-|-Xaa- &gt;&gt; -Asn-|-Xaa- &gt; -Met-|-Xaa-, -Ser-|-Xaa-.. Inactivated by the serine protease inhibitor diisopropylfluorophosphate. In terms of biological role, abundant protease in the cytosolic granules of cytotoxic T-cells and NK-cells which activates caspase-independent pyroptosis when delivered into the target cell through the immunological synapse. It cleaves after Asp. Once delivered into the target cell, acts by catalyzing cleavage of gasdermin-E (GSDME), releasing the pore-forming moiety of GSDME, thereby triggering pyroptosis and target cell death. Seems to be linked to an activation cascade of caspases (aspartate-specific cysteine proteases) responsible for apoptosis execution. Cleaves caspase-3 and -9 (CASP3 and CASP9, respectively) to give rise to active enzymes mediating apoptosis. Cleaves and activates CASP7 in response to bacterial infection, promoting plasma membrane repair. The chain is Granzyme B(G,H) (Gzmb) from Mus musculus (Mouse).